A 522-amino-acid chain; its full sequence is Apolipoprotein N-acyltransferase (522 aa).

Helical transmembrane passes span 17–37 (YFTY…FSPF), 61–81 (TALL…VSWL), 98–118 (FLVG…TYLV), 127–147 (VIFA…FTGF), 164–184 (IAPI…SAVI), and 197–217 (LKLV…SAYS). Positions 236-483 (AQGNIEQNLK…ETTLTYKIAP (248 aa)) constitute a CN hydrolase domain. Residue Glu-276 is the Proton acceptor of the active site. Lys-342 is a catalytic residue. The Nucleophile role is filled by Cys-394. Residues 495–515 (NMPLYALSLLFLLLHSMMAFI) traverse the membrane as a helical segment.

It belongs to the CN hydrolase family. Apolipoprotein N-acyltransferase subfamily.

The protein localises to the cell inner membrane. It carries out the reaction N-terminal S-1,2-diacyl-sn-glyceryl-L-cysteinyl-[lipoprotein] + a glycerophospholipid = N-acyl-S-1,2-diacyl-sn-glyceryl-L-cysteinyl-[lipoprotein] + a 2-acyl-sn-glycero-3-phospholipid + H(+). It functions in the pathway protein modification; lipoprotein biosynthesis (N-acyl transfer). Functionally, catalyzes the phospholipid dependent N-acylation of the N-terminal cysteine of apolipoprotein, the last step in lipoprotein maturation. The sequence is that of Apolipoprotein N-acyltransferase from Haemophilus influenzae (strain ATCC 51907 / DSM 11121 / KW20 / Rd).